Reading from the N-terminus, the 359-residue chain is Ras association domain-containing protein 7 (359 aa).

One can recognise a Ras-associating domain in the interval 6–89; that stretch reads VAMELKVWVD…VQFVLRRTGP (84 aa). Residues 87–123 are disordered; the sequence is TGPSLSGRPSSDNCPPPERCPVRASLPPKPSAIPGRE. Positions 89–99 are enriched in polar residues; it reads PSLSGRPSSDN. Coiled-coil stretches lie at residues 180 to 208 and 242 to 301; these read WEQE…TAEH and AAER…QQFI. A disordered region spans residues 339-359; it reads SHILVSSLSPEVPPMRQSSWR.

Interacts with MAP2K7 and GTP-bound NRAS. Post-translationally, polyubiquitinated and degraded by the proteasome upon prolonged stress stimuli.

The protein localises to the cytoplasm. It is found in the cytoskeleton. Its subcellular location is the microtubule organizing center. It localises to the centrosome. Functionally, negatively regulates stress-induced JNK activation and apoptosis by promoting MAP2K7 phosphorylation and inhibiting its ability to activate JNK. Following prolonged stress, anti-apoptotic effect stops because of degradation of RASSF7 protein via the ubiquitin-proteasome pathway. Required for the activation of AURKB and chromosomal congression during mitosis where it stimulates microtubule polymerization. This is Ras association domain-containing protein 7 (Rassf7) from Mus musculus (Mouse).